Here is a 102-residue protein sequence, read N- to C-terminus: Large ribosomal subunit protein bL21 (102 aa).

It belongs to the bacterial ribosomal protein bL21 family. As to quaternary structure, part of the 50S ribosomal subunit. Contacts protein L20.

This protein binds to 23S rRNA in the presence of protein L20. The chain is Large ribosomal subunit protein bL21 from Listeria innocua serovar 6a (strain ATCC BAA-680 / CLIP 11262).